The chain runs to 574 residues: Membralin (574 aa).

The segment at 1 to 27 (MSEHAAAPGPGPNGGGGGGAAPVRGPR) is disordered. N-acetylserine is present on serine 2. A helical transmembrane segment spans residues 69–89 (FFVLLKALFVLFVLAYIHIVF). An N-linked (GlcNAc...) asparagine glycan is attached at asparagine 180. The next 3 membrane-spanning stretches (helical) occupy residues 293-313 (TSYL…SMLL), 337-357 (IAFP…MEAI), and 417-437 (YSSL…IYFF). 2 stretches are compositionally biased toward low complexity: residues 461–470 (LGPGTPTALP) and 491–501 (LGPSSSPAPTG). Disordered regions lie at residues 461-515 (LGPG…GASV) and 546-574 (RRPT…PAGS).

This sequence belongs to the membralin family. As to quaternary structure, interacts with ERLIN2. As to expression, detected in brain, spinal cord, lung, liver and kidney.

It localises to the endoplasmic reticulum membrane. In terms of biological role, may have a role in the ERAD pathway required for clearance of misfolded proteins in the endoplasmic reticulum (ER). Promotes survival of motor neurons, probably by protecting against ER stress. The protein is Membralin (Tmem259) of Mus musculus (Mouse).